The chain runs to 331 residues: Beta-ketoacyl-[acyl-carrier-protein] synthase III (331 aa).

Catalysis depends on residues C113 and H253. The ACP-binding stretch occupies residues 254-258 (QANTR). N283 is a catalytic residue.

This sequence belongs to the thiolase-like superfamily. FabH family. In terms of assembly, homodimer.

It localises to the cytoplasm. It carries out the reaction malonyl-[ACP] + acetyl-CoA + H(+) = 3-oxobutanoyl-[ACP] + CO2 + CoA. It functions in the pathway lipid metabolism; fatty acid biosynthesis. In terms of biological role, catalyzes the condensation reaction of fatty acid synthesis by the addition to an acyl acceptor of two carbons from malonyl-ACP. Catalyzes the first condensation reaction which initiates fatty acid synthesis and may therefore play a role in governing the total rate of fatty acid production. Possesses both acetoacetyl-ACP synthase and acetyl transacylase activities. Its substrate specificity determines the biosynthesis of branched-chain and/or straight-chain of fatty acids. This Desulfitobacterium hafniense (strain DSM 10664 / DCB-2) protein is Beta-ketoacyl-[acyl-carrier-protein] synthase III.